The primary structure comprises 517 residues: L-amino-acid oxidase (517 aa).

Positions 1 to 18 (MNVFFMFSLLFLAALGSC) are cleaved as a signal peptide. Cys29 and Cys192 form a disulfide bridge. FAD is bound by residues 62 to 63 (MA), 82 to 83 (EA), Arg90, and 106 to 109 (GPMR). Substrate is bound at residue Arg109. N-linked (GlcNAc...) asparagine glycosylation is present at Asn191. An FAD-binding site is contributed by Val280. A disulfide bond links Cys350 and Cys431. Tyr391 lines the substrate pocket. Residues Glu476 and 483–488 (GWLDST) contribute to the FAD site. 483–484 (GW) contributes to the substrate binding site.

It belongs to the flavin monoamine oxidase family. FIG1 subfamily. In terms of assembly, homodimer; non-covalently linked. The cofactor is FAD. In terms of processing, N-glycosylated. Expressed by the venom gland.

The protein localises to the secreted. It carries out the reaction an L-alpha-amino acid + O2 + H2O = a 2-oxocarboxylate + H2O2 + NH4(+). Its function is as follows. Catalyzes an oxidative deamination of predominantly hydrophobic and aromatic L-amino acids, thus producing hydrogen peroxide that may contribute to the diverse toxic effects of this enzyme. Exhibits diverse biological activities, such as hemorrhage, hemolysis, edema, apoptosis of vascular endothelial cells or tumor cell lines, antiparasitic activities, as well as regulation of platelet aggregation. Effects of snake L-amino oxidases on platelets are controversial, since they either induce aggregation or inhibit agonist-induced aggregation. These different effects are probably due to different experimental conditions. This protein has antibacterial activities. The protein is L-amino-acid oxidase of Pseudechis australis (Mulga snake).